An 80-amino-acid polypeptide reads, in one-letter code: UPF0180 protein BPUM_1317 (80 aa).

The protein belongs to the UPF0180 family.

The chain is UPF0180 protein BPUM_1317 from Bacillus pumilus (strain SAFR-032).